Reading from the N-terminus, the 746-residue chain is Protein zyg-11 homolog (746 aa).

LRR repeat units lie at residues 185 to 209, 216 to 241, and 265 to 289; these read LPRL…GLRS, MHQL…VLQH, and LPQL…AFVE.

The protein belongs to the zyg-11 family.

Its function is as follows. Serves as substrate adapter subunit in an E3 ubiquitin ligase complex zyg11-cul2-elongin BC. Targets substrates bearing N-terminal glycine degrons for proteasomal degradation. This is Protein zyg-11 homolog (zyg11) from Danio rerio (Zebrafish).